Reading from the N-terminus, the 61-residue chain is Small ribosomal subunit protein uS14 (61 aa).

Zn(2+) is bound by residues C24, C27, C40, and C43.

It belongs to the universal ribosomal protein uS14 family. Zinc-binding uS14 subfamily. Part of the 30S ribosomal subunit. Contacts proteins S3 and S10. It depends on Zn(2+) as a cofactor.

Its function is as follows. Binds 16S rRNA, required for the assembly of 30S particles and may also be responsible for determining the conformation of the 16S rRNA at the A site. This is Small ribosomal subunit protein uS14 from Bifidobacterium longum (strain DJO10A).